The sequence spans 1531 residues: La-related protein Larp4B (1531 aa).

A compositionally biased stretch (low complexity) spans His112–Leu147. 2 disordered regions span residues His112–Thr148 and Gln239–Ile263. Residues Asn262–Ile351 form the HTH La-type RNA-binding domain. In terms of domain architecture, RRM spans Cys348–Lys423. Disordered regions lie at residues Pro533–Asn605, Ala710–Ser736, Thr748–Gln768, Gln791–Gln1135, Asp1160–Leu1211, and Ala1251–Gln1285. Positions Tyr565 to Gly578 are enriched in low complexity. Low complexity-rich tracts occupy residues Gln754–Gln768 and Ser810–Ser826. The span at Ser860–Gly884 shows a compositional bias: polar residues. A compositionally biased stretch (low complexity) spans Ala945–Thr959. Over residues His966–Asn975 the composition is skewed to basic residues. A compositionally biased stretch (gly residues) spans Asn983–Gly1004. A compositionally biased stretch (low complexity) spans His1031–Gln1045. A compositionally biased stretch (polar residues) spans Thr1068–Asn1086. Positions Ser1087–Gln1115 are enriched in low complexity. Residue Ser1123 is modified to Phosphoserine. The span at Thr1164 to Lys1173 shows a compositional bias: gly residues. The span at Pro1183–Pro1200 shows a compositional bias: polar residues. Basic and acidic residues predominate over residues Lys1270–Pro1280. Phosphoserine occurs at positions 1370 and 1413. Disordered stretches follow at residues Lys1393 to His1418 and Gly1450 to Ser1531. Polar residues-rich tracts occupy residues Ala1467 to Val1477 and Gln1502 to Asn1515.

Its function is as follows. Probable RNA binding protein. Negatively regulates myc at the protein level, via an unknown mechanism, and may therefore have a role in growth. Has no effect on myc mRNA levels. The polypeptide is La-related protein Larp4B (Drosophila melanogaster (Fruit fly)).